We begin with the raw amino-acid sequence, 269 residues long: NAD kinase (269 aa).

Residue D45 is the Proton acceptor of the active site. NAD(+) contacts are provided by residues 45-46 (DG), 122-123 (NE), R149, D151, and A186.

Belongs to the NAD kinase family. A divalent metal cation is required as a cofactor.

It is found in the cytoplasm. It catalyses the reaction NAD(+) + ATP = ADP + NADP(+) + H(+). In terms of biological role, involved in the regulation of the intracellular balance of NAD and NADP, and is a key enzyme in the biosynthesis of NADP. Catalyzes specifically the phosphorylation on 2'-hydroxyl of the adenosine moiety of NAD to yield NADP. This is NAD kinase from Staphylococcus aureus (strain Mu3 / ATCC 700698).